The chain runs to 288 residues: tRNA dimethylallyltransferase (288 aa).

ATP is bound at residue 2–9 (GPTAAGKS). Substrate is bound at residue 4-9 (TAAGKS). The interaction with substrate tRNA stretch occupies residues 27-30 (DSMQ).

This sequence belongs to the IPP transferase family. Monomer. Mg(2+) is required as a cofactor.

It catalyses the reaction adenosine(37) in tRNA + dimethylallyl diphosphate = N(6)-dimethylallyladenosine(37) in tRNA + diphosphate. Functionally, catalyzes the transfer of a dimethylallyl group onto the adenine at position 37 in tRNAs that read codons beginning with uridine, leading to the formation of N6-(dimethylallyl)adenosine (i(6)A). The sequence is that of tRNA dimethylallyltransferase from Frankia alni (strain DSM 45986 / CECT 9034 / ACN14a).